Consider the following 235-residue polypeptide: Ribonuclease 3 (235 aa).

In terms of domain architecture, RNase III spans 7-135 (FAALEARLGH…VVAAVYLDGG (129 aa)). Residue glutamate 48 participates in Mg(2+) binding. Residue aspartate 52 is part of the active site. Mg(2+) is bound by residues aspartate 121 and glutamate 124. The active site involves glutamate 124. The 70-residue stretch at 160 to 229 (DPKTVLQEWA…ASAFLAREGV (70 aa)) folds into the DRBM domain.

It belongs to the ribonuclease III family. Homodimer. Mg(2+) serves as cofactor.

It localises to the cytoplasm. It catalyses the reaction Endonucleolytic cleavage to 5'-phosphomonoester.. Functionally, digests double-stranded RNA. Involved in the processing of primary rRNA transcript to yield the immediate precursors to the large and small rRNAs (23S and 16S). Processes some mRNAs, and tRNAs when they are encoded in the rRNA operon. Processes pre-crRNA and tracrRNA of type II CRISPR loci if present in the organism. The polypeptide is Ribonuclease 3 (Azorhizobium caulinodans (strain ATCC 43989 / DSM 5975 / JCM 20966 / LMG 6465 / NBRC 14845 / NCIMB 13405 / ORS 571)).